The chain runs to 187 residues: Signal peptidase complex catalytic subunit SEC11 (187 aa).

Over 1 to 18 (MLSSLSPYMANPRNTLSQ) the chain is Cytoplasmic. A helical; Signal-anchor for type II membrane protein membrane pass occupies residues 19–39 (VLNFGLVLSSAFMVWKALSVI). The Lumenal portion of the chain corresponds to 40–187 (TNSASPVVVV…MGLMVMLQRE (148 aa)). Residues Ser53 and His92 each act as charge relay system in the active site. Asn125 carries N-linked (GlcNAc...) asparagine glycosylation. Residue Asp129 is the Charge relay system of the active site. Positions 173–184 (VLLGFMGLMVML) are C-terminal short (CTS) helix.

Belongs to the peptidase S26B family. Component of the signal peptidase complex (SPC) composed of a catalytic subunit SEC11 and three accessory subunits SPC1, SPC2 and SPC3. The complex induces a local thinning of the ER membrane which is used to measure the length of the signal peptide (SP) h-region of protein substrates. This ensures the selectivity of the complex towards h-regions shorter than 18-20 amino acids. SPC associates with the translocon complex.

It localises to the endoplasmic reticulum membrane. The catalysed reaction is Cleavage of hydrophobic, N-terminal signal or leader sequences from secreted and periplasmic proteins.. Its function is as follows. Catalytic component of the signal peptidase complex (SPC) which catalyzes the cleavage of N-terminal signal sequences from nascent proteins as they are translocated into the lumen of the endoplasmic reticulum. Specifically cleaves N-terminal signal peptides that contain a hydrophobic alpha-helix (h-region) shorter than 18-20 amino acids. The polypeptide is Signal peptidase complex catalytic subunit SEC11 (SEC11) (Ajellomyces capsulatus (strain NAm1 / WU24) (Darling's disease fungus)).